The following is a 251-amino-acid chain: MAGHSKWATTKHKKAANDAKRGKEFAKLIKNIEVAARTGGGDPSANPTLQDAITKAKKSSVPNDNIERARKRGSGEEAGGANWETIMYEGYGPNGVAMLIECLTDNRNRATTDVRTAMNKNGGNMADAGSVSYLFTRKGVAVLDKGENTEDDILLAVLDAGAEEVNDLGEKFEVVCESSDINAVRDALKEAEIDYDSIELDFRASMEVPADATTAKKVFNLIDALEDSDDVQNVFTNMNVSEDVLAELDSE.

The tract at residues 1-22 (MAGHSKWATTKHKKAANDAKRG) is disordered.

This sequence belongs to the TACO1 family.

It is found in the cytoplasm. This Corynebacterium jeikeium (strain K411) protein is Probable transcriptional regulatory protein jk1057.